The following is a 130-amino-acid chain: Small ribosomal subunit protein uS8 (130 aa).

The protein belongs to the universal ribosomal protein uS8 family. As to quaternary structure, part of the 30S ribosomal subunit. Contacts proteins S5 and S12.

Its function is as follows. One of the primary rRNA binding proteins, it binds directly to 16S rRNA central domain where it helps coordinate assembly of the platform of the 30S subunit. This chain is Small ribosomal subunit protein uS8, found in Vibrio cholerae serotype O1 (strain ATCC 39541 / Classical Ogawa 395 / O395).